We begin with the raw amino-acid sequence, 163 residues long: Cyanate hydratase (163 aa).

Active-site residues include Arg-103, Glu-106, and Ser-129.

Belongs to the cyanase family.

The enzyme catalyses cyanate + hydrogencarbonate + 3 H(+) = NH4(+) + 2 CO2. Catalyzes the reaction of cyanate with bicarbonate to produce ammonia and carbon dioxide. This Talaromyces marneffei (strain ATCC 18224 / CBS 334.59 / QM 7333) (Penicillium marneffei) protein is Cyanate hydratase.